Consider the following 362-residue polypeptide: Peptide chain release factor 1 (362 aa).

Q235 carries the post-translational modification N5-methylglutamine.

This sequence belongs to the prokaryotic/mitochondrial release factor family. Post-translationally, methylated by PrmC. Methylation increases the termination efficiency of RF1.

It localises to the cytoplasm. Functionally, peptide chain release factor 1 directs the termination of translation in response to the peptide chain termination codons UAG and UAA. The chain is Peptide chain release factor 1 from Acinetobacter baumannii (strain ACICU).